Consider the following 169-residue polypeptide: Cell division inhibitor SulA (169 aa).

The segment at 106–112 is ftsZ binding; sequence ALRTGNY. The lon protease binding stretch occupies residues 162–169; sequence KIHSNLYH.

It belongs to the SulA family. In terms of assembly, interacts with FtsZ. In terms of processing, is rapidly cleaved and degraded by the Lon protease once DNA damage is repaired.

In terms of biological role, component of the SOS system and an inhibitor of cell division. Accumulation of SulA causes rapid cessation of cell division and the appearance of long, non-septate filaments. In the presence of GTP, binds a polymerization-competent form of FtsZ in a 1:1 ratio, thus inhibiting FtsZ polymerization and therefore preventing it from participating in the assembly of the Z ring. This mechanism prevents the premature segregation of damaged DNA to daughter cells during cell division. This Escherichia coli O81 (strain ED1a) protein is Cell division inhibitor SulA.